Consider the following 71-residue polypeptide: Small ribosomal subunit protein bS21 (71 aa).

Residues 39-71 (EKPTQERKRKAAAAVKRQLRRSSRDVTKRQRLY) are disordered. Residues 45–59 (RKRKAAAAVKRQLRR) are compositionally biased toward basic residues. Residues 60 to 71 (SSRDVTKRQRLY) are compositionally biased toward basic and acidic residues.

This sequence belongs to the bacterial ribosomal protein bS21 family.

The chain is Small ribosomal subunit protein bS21 from Stenotrophomonas maltophilia (strain K279a).